The following is a 428-amino-acid chain: Dihydroorotase (428 aa).

Residues His59 and His61 each coordinate Zn(2+). Residues His61 to Arg63 and Asn93 contribute to the substrate site. Positions 151, 178, and 231 each coordinate Zn(2+). Asn277 serves as a coordination point for substrate. Zn(2+) is bound at residue Asp304. The active site involves Asp304. Substrate-binding positions include His308 and Phe322–Gly323.

It belongs to the metallo-dependent hydrolases superfamily. DHOase family. Class I DHOase subfamily. The cofactor is Zn(2+).

It catalyses the reaction (S)-dihydroorotate + H2O = N-carbamoyl-L-aspartate + H(+). It participates in pyrimidine metabolism; UMP biosynthesis via de novo pathway; (S)-dihydroorotate from bicarbonate: step 3/3. In terms of biological role, catalyzes the reversible cyclization of carbamoyl aspartate to dihydroorotate. The polypeptide is Dihydroorotase (Bacillus cereus (strain ZK / E33L)).